A 700-amino-acid polypeptide reads, in one-letter code: Polyribonucleotide nucleotidyltransferase (700 aa).

The Mg(2+) site is built by Asp491 and Asp497. Residues 558–617 (PNYAVIEINPDKIRDVIGKGGATIRQLTEETGAVIDIDDAGTIRIFGENKAATKAAIAKI) form the KH domain. The S1 motif domain occupies 627 to 695 (GKTYEGTVAR…NRGRIKLTMK (69 aa)).

It belongs to the polyribonucleotide nucleotidyltransferase family. In terms of assembly, component of the RNA degradosome, which is a multiprotein complex involved in RNA processing and mRNA degradation. It depends on Mg(2+) as a cofactor.

Its subcellular location is the cytoplasm. It carries out the reaction RNA(n+1) + phosphate = RNA(n) + a ribonucleoside 5'-diphosphate. Functionally, involved in mRNA degradation. Catalyzes the phosphorolysis of single-stranded polyribonucleotides processively in the 3'- to 5'-direction. The chain is Polyribonucleotide nucleotidyltransferase from Psychrobacter arcticus (strain DSM 17307 / VKM B-2377 / 273-4).